A 354-amino-acid polypeptide reads, in one-letter code: MDLPVLPPVSPMLSKSVNQIPPGMSYEPKWDGFRSILFRDGAEVELGSRKERPMTRYFPELVAAALTELPDRCVIDGEIVLPADNHLDFEALQLRLHPAASRVAMLAEQTPAAFIAFDLLALGDDDYTGRPFSERRAALETALADAGPTFHLTPATTDLPTAQRWFHEFEGAGLDGVIAKPLDLTYQPDKRVMFKVKHQRTADCVVAGYRLHKSGADAVGSLLLGLYDDDGSLASVGVIGAFPMATRRALFTELQTLVADFDHHPWNWAAQAAADPELARRYGGGSRWNAGKDLSFVPLRPERLVEVRYDHMEGRRFRHTAQFNRWRPDRDARSCTFAQLDSPPHSSSVTSCRV.

Catalysis depends on K29, which acts as the N6-AMP-lysine intermediate.

Belongs to the ATP-dependent DNA ligase family.

It catalyses the reaction ATP + (deoxyribonucleotide)n-3'-hydroxyl + 5'-phospho-(deoxyribonucleotide)m = (deoxyribonucleotide)n+m + AMP + diphosphate.. In terms of biological role, DNA ligase that seals nicks in double-stranded DNA during DNA replication, DNA recombination and DNA repair. Has weak intrinsic nick joining activities and accumulates DNA-adenylate. Acts as a backup for LigD in the Ku-LigD-dependent NHEJ pathway. In Mycolicibacterium smegmatis (strain ATCC 700084 / mc(2)155) (Mycobacterium smegmatis), this protein is DNA ligase C2 (ligC2).